The chain runs to 118 residues: V-type proton ATPase subunit F (118 aa).

This sequence belongs to the V-ATPase F subunit family. V-ATPase is a heteromultimeric enzyme composed of a peripheral catalytic V1 complex (components A to H) attached to an integral membrane V0 proton pore complex (components: a, c, c', c'', d, e, f and VOA1).

The protein resides in the vacuole membrane. Subunit of the V1 complex of vacuolar(H+)-ATPase (V-ATPase), a multisubunit enzyme composed of a peripheral complex (V1) that hydrolyzes ATP and a membrane integral complex (V0) that translocates protons. V-ATPase is responsible for acidifying and maintaining the pH of intracellular compartments. The protein is V-type proton ATPase subunit F of Saccharomyces cerevisiae (strain ATCC 204508 / S288c) (Baker's yeast).